A 104-amino-acid chain; its full sequence is Protein RnfH (104 aa).

The protein belongs to the UPF0125 (RnfH) family.

This Pseudomonas fluorescens (strain Pf0-1) protein is Protein RnfH.